A 481-amino-acid chain; its full sequence is Pyruvate kinase (481 aa).

Arg-36 lines the substrate pocket. Residues Asn-38, Ser-40, and Asp-70 each coordinate K(+). Residue Asn-38 to His-41 participates in ATP binding. Arg-77 and Lys-160 together coordinate ATP. Position 225 (Glu-225) interacts with Mg(2+). Gly-251, Asp-252, and Thr-284 together coordinate substrate. Asp-252 is a Mg(2+) binding site.

This sequence belongs to the pyruvate kinase family. Homotetramer. Mg(2+) serves as cofactor. Requires K(+) as cofactor.

The enzyme catalyses pyruvate + ATP = phosphoenolpyruvate + ADP + H(+). It functions in the pathway carbohydrate degradation; glycolysis; pyruvate from D-glyceraldehyde 3-phosphate: step 5/5. Its activity is regulated as follows. Allosterically activated by AMP and by several sugar phosphates. Belongs to type II PK. The sequence is that of Pyruvate kinase (pykA) from Buchnera aphidicola subsp. Schizaphis graminum (strain Sg).